The sequence spans 261 residues: Type III pantothenate kinase (261 aa).

Position 6–13 (6–13 (DAGNSNIT)) interacts with ATP. Residues Tyr100 and 107 to 110 (GADR) each bind substrate. Asp109 (proton acceptor) is an active-site residue. Asp129 is a binding site for K(+). Thr132 is a binding site for ATP. Thr184 serves as a coordination point for substrate.

The protein belongs to the type III pantothenate kinase family. Homodimer. NH4(+) serves as cofactor. It depends on K(+) as a cofactor.

Its subcellular location is the cytoplasm. It carries out the reaction (R)-pantothenate + ATP = (R)-4'-phosphopantothenate + ADP + H(+). Its pathway is cofactor biosynthesis; coenzyme A biosynthesis; CoA from (R)-pantothenate: step 1/5. Its function is as follows. Catalyzes the phosphorylation of pantothenate (Pan), the first step in CoA biosynthesis. The chain is Type III pantothenate kinase from Solibacter usitatus (strain Ellin6076).